The sequence spans 398 residues: Lysophospholipid transporter LplT (398 aa).

The next 11 helical transmembrane spans lie at V19–A39, I53–A73, L91–I111, L139–A159, I164–I184, L227–L247, Y257–V277, T281–L301, A304–V324, G350–I370, and V372–I392.

This sequence belongs to the major facilitator superfamily. LplT (TC 2.A.1.42) family.

The protein localises to the cell inner membrane. Functionally, catalyzes the facilitated diffusion of 2-acyl-glycero-3-phosphoethanolamine (2-acyl-GPE) into the cell. The polypeptide is Lysophospholipid transporter LplT (Citrobacter koseri (strain ATCC BAA-895 / CDC 4225-83 / SGSC4696)).